The following is a 225-amino-acid chain: Zinc finger protein 22 (225 aa).

The disordered stretch occupies residues 1–35 (MRLGKPKGGISRSSSQGKVYENQRKTGRQRQRWGM). The residue at position 18 (Lys18) is an N6-acetyllysine. 5 C2H2-type zinc fingers span residues 55 to 77 (YKCV…QKIH), 83 to 105 (HKCA…RRVH), 111 to 133 (YRCD…QRIH), 139 to 161 (YQCD…QRTH), and 167 to 189 (YQCS…TKVH). A disordered region spans residues 183–225 (RQHTKVHEEEKPRKTRGRSLRAKTHSLSSWKAGKGRRSAAGLR). Residues 195 to 206 (RKTRGRSLRAKT) are compositionally biased toward basic residues.

It belongs to the krueppel C2H2-type zinc-finger protein family.

The protein resides in the nucleus. In terms of biological role, binds DNA through the consensus sequence 5'-CAATG-3'. May be involved in transcriptional regulation and may play a role in tooth formation. The sequence is that of Zinc finger protein 22 (ZNF22) from Bos taurus (Bovine).